The sequence spans 593 residues: Arginine--tRNA ligase (593 aa).

The 'HIGH' region signature appears at 138-148 (ANPTGPLHVGH).

This sequence belongs to the class-I aminoacyl-tRNA synthetase family. In terms of assembly, monomer.

The protein localises to the cytoplasm. The enzyme catalyses tRNA(Arg) + L-arginine + ATP = L-arginyl-tRNA(Arg) + AMP + diphosphate. The sequence is that of Arginine--tRNA ligase from Burkholderia cenocepacia (strain ATCC BAA-245 / DSM 16553 / LMG 16656 / NCTC 13227 / J2315 / CF5610) (Burkholderia cepacia (strain J2315)).